The chain runs to 179 residues: Signal peptidase complex subunit 3 (179 aa).

Over 1–12 (MHTVLTRGNATV) the chain is Cytoplasmic. The chain crosses the membrane as a helical; Signal-anchor for type II membrane protein span at residues 13-33 (AYTLSVLACLTFSCFLSTVFL). At 34 to 179 (DYRTDANINT…FPADYATSSI (146 aa)) the chain is on the lumenal side. Residues N73 and N141 are each glycosylated (N-linked (GlcNAc...) asparagine).

This sequence belongs to the SPCS3 family. In terms of assembly, component of the signal peptidase complex (SPC) composed of a catalytic subunit twr/SEC11 and three accessory subunits Spase12/SPCS1, Spase25/SPCS2 and Spase22-23/SPCS3. The complex induces a local thinning of the ER membrane which is used to measure the length of the signal peptide (SP) h-region of protein substrates. This ensures the selectivity of the complex towards h-regions shorter than 18-20 amino acids.

The protein localises to the endoplasmic reticulum membrane. In terms of biological role, essential component of the signal peptidase complex (SPC) which catalyzes the cleavage of N-terminal signal sequences from nascent proteins as they are translocated into the lumen of the endoplasmic reticulum. Essential for the SPC catalytic activity, possibly by stabilizing and positioning the active center of the complex close to the lumenal surface. (Microbial infection) Plays an important role in infection by flaviviruses such as West Nile virus and Dengue virus type 2. This chain is Signal peptidase complex subunit 3 (Spase22-23), found in Drosophila melanogaster (Fruit fly).